The following is a 373-amino-acid chain: Histidinol-phosphate aminotransferase 2 (373 aa).

N6-(pyridoxal phosphate)lysine is present on Lys-229.

Belongs to the class-II pyridoxal-phosphate-dependent aminotransferase family. Histidinol-phosphate aminotransferase subfamily. In terms of assembly, homodimer. The cofactor is pyridoxal 5'-phosphate.

It carries out the reaction L-histidinol phosphate + 2-oxoglutarate = 3-(imidazol-4-yl)-2-oxopropyl phosphate + L-glutamate. It functions in the pathway amino-acid biosynthesis; L-histidine biosynthesis; L-histidine from 5-phospho-alpha-D-ribose 1-diphosphate: step 7/9. This Hydrogenovibrio crunogenus (strain DSM 25203 / XCL-2) (Thiomicrospira crunogena) protein is Histidinol-phosphate aminotransferase 2.